The sequence spans 744 residues: Biotin sulfoxide reductase (744 aa).

A Mo-bis(molybdopterin guanine dinucleotide)-binding site is contributed by Ser121.

This sequence belongs to the prokaryotic molybdopterin-containing oxidoreductase family. The cofactor is Mo-bis(molybdopterin guanine dinucleotide).

Functionally, this enzyme may serve as a scavenger, allowing the cell to utilize biotin sulfoxide as a biotin source. It reduces a spontaneous oxidation product of biotin, D-biotin D-sulfoxide (BSO or BDS), back to biotin. In Cereibacter sphaeroides (Rhodobacter sphaeroides), this protein is Biotin sulfoxide reductase.